The following is a 164-amino-acid chain: Putative Cys-tRNA(Pro)/Cys-tRNA(Cys) deacylase EbsC (164 aa).

It belongs to the prolyl-tRNA editing family. YbaK/EbsC subfamily.

Its function is as follows. Affects the expression of the receptor, named binding substance, that mediates mating aggregate formation. Could be a regulatory protein that suppresses the function or expression of ebsA and/or ebsMB. This Enterococcus faecalis (strain ATCC 700802 / V583) protein is Putative Cys-tRNA(Pro)/Cys-tRNA(Cys) deacylase EbsC.